Here is a 982-residue protein sequence, read N- to C-terminus: Capsid protein (982 aa).

2 disordered regions span residues 592–613 (VFRS…RWLT) and 628–655 (EPPA…HEEE). Over residues 597–613 (PRRESTTTTDDSPRWLT) the composition is skewed to basic and acidic residues. Residues 635–649 (GRSSSPVTSSISEGT) show a composition bias toward polar residues.

As to quaternary structure, homomultimer.

It localises to the virion. In terms of biological role, capsid protein self-assembles to form an icosahedral capsid with a T=1 symmetry, about 35-40 nm in diameter. In Penicillium chrysogenum virus (isolate Caston/2003) (PcV), this protein is Capsid protein (p2).